We begin with the raw amino-acid sequence, 283 residues long: Elongation factor Ts (283 aa).

The involved in Mg(2+) ion dislocation from EF-Tu stretch occupies residues 80 to 83 (TDFV).

This sequence belongs to the EF-Ts family.

Its subcellular location is the cytoplasm. Its function is as follows. Associates with the EF-Tu.GDP complex and induces the exchange of GDP to GTP. It remains bound to the aminoacyl-tRNA.EF-Tu.GTP complex up to the GTP hydrolysis stage on the ribosome. The sequence is that of Elongation factor Ts from Salmonella gallinarum (strain 287/91 / NCTC 13346).